The primary structure comprises 523 residues: Major facilitator-type transporter psiT2 (523 aa).

Over residues 1–26 (MSLERSTSPNPTERTSLLSDTASTIS) the composition is skewed to polar residues. Residues 1-45 (MSLERSTSPNPTERTSLLSDTASTISSRDDVEQSSLKQRRTPIPT) form a disordered region. Transmembrane regions (helical) follow at residues 88–108 (FYSG…IFML), 125–145 (ALGI…TMML), 149–169 (VCAG…SELT), 175–195 (ALVV…GPLI), and 221–241 (FLPS…GYFF). Asn-269 is a glycosylation site (N-linked (GlcNAc...) asparagine). The next 3 helical transmembrane spans lie at 317 to 337 (FLMF…FTAV), 352 to 372 (AFSV…PWVL), and 382 to 402 (HFCM…NPLA). Residue Asn-410 is glycosylated (N-linked (GlcNAc...) asparagine). The next 3 helical transmembrane spans lie at 419-439 (GLLY…VMAF), 455-474 (LATA…AFCP), and 488-508 (NILG…VGVW).

The protein belongs to the major facilitator superfamily. TCR/Tet family.

It is found in the membrane. Major facilitator-type transporter; part of the gene cluster that mediates the biosynthesis of psilocybin, a psychotropic tryptamine-derived natural product. In Psilocybe cubensis (Psychedelic mushroom), this protein is Major facilitator-type transporter psiT2.